A 612-amino-acid polypeptide reads, in one-letter code: Mineralocorticoid receptor (612 aa).

The segment at 1 to 228 is modulating; the sequence is GNEIADSTVS…STGPSRPSKV (228 aa). Zn(2+) contacts are provided by cysteine 229, cysteine 232, cysteine 246, cysteine 249, cysteine 269, cysteine 275, cysteine 285, and cysteine 288. 2 consecutive NR C4-type zinc fingers follow at residues 229 to 249 and 269 to 293; these read CLVC…CGSC and CAGR…LQKC. A DNA-binding region (nuclear receptor) is located at residues 229–298; sequence CLVCGDEASG…RLQKCLQAGM (70 aa). The hinge stretch occupies residues 299-349; that stretch reads NLGARKSKKLGKLKGVHEEHPQQPLQQTPTASPKEDTTLTSSSKEPSANSN. The interval 310 to 348 is disordered; sequence KLKGVHEEHPQQPLQQTPTASPKEDTTLTSSSKEPSANS. A compositionally biased stretch (low complexity) spans 339–348; the sequence is SSSKEPSANS. The region spanning 350–592 is the NR LBD domain; the sequence is SLVPLISAVS…EFPAMLVEII (243 aa). Positions 398 and 404 each coordinate 21-hydroxyprogesterone. 2 residues coordinate aldosterone: asparagine 398 and glutamine 404. Residues asparagine 398 and glutamine 404 each contribute to the progesterone site. Positions 410-413 are important for coactivator binding; sequence KWAK. 21-hydroxyprogesterone-binding residues include arginine 445 and threonine 573. Arginine 445 and threonine 573 together coordinate aldosterone. The progesterone site is built by arginine 445 and threonine 573.

Belongs to the nuclear hormone receptor family. NR3 subfamily.

The protein localises to the cytoplasm. Its subcellular location is the nucleus. Functionally, receptor for both mineralocorticoids (MC) such as aldosterone and glucocorticoids (GC) such as corticosterone or cortisol. Binds to mineralocorticoid response elements (MRE) and transactivates target genes. The effect of MC is to increase ion and water transport and thus raise extracellular fluid volume and blood pressure and lower potassium levels. The polypeptide is Mineralocorticoid receptor (nr3c2) (Xenopus laevis (African clawed frog)).